A 458-amino-acid chain; its full sequence is Glutamyl-tRNA reductase (458 aa).

Residues Thr49–Arg52, Ser109, Glu114–Gln116, and Gln120 contribute to the substrate site. Cys50 acts as the Nucleophile in catalysis. Position 191 to 196 (Gly191 to Ala196) interacts with NADP(+).

The protein belongs to the glutamyl-tRNA reductase family. Homodimer.

It carries out the reaction (S)-4-amino-5-oxopentanoate + tRNA(Glu) + NADP(+) = L-glutamyl-tRNA(Glu) + NADPH + H(+). The protein operates within porphyrin-containing compound metabolism; protoporphyrin-IX biosynthesis; 5-aminolevulinate from L-glutamyl-tRNA(Glu): step 1/2. Its function is as follows. Catalyzes the NADPH-dependent reduction of glutamyl-tRNA(Glu) to glutamate 1-semialdehyde (GSA). In Corynebacterium aurimucosum (strain ATCC 700975 / DSM 44827 / CIP 107346 / CN-1) (Corynebacterium nigricans), this protein is Glutamyl-tRNA reductase.